Consider the following 1939-residue polypeptide: Myosin-1 (1939 aa).

The Myosin N-terminal SH3-like domain occupies 33-82; that stretch reads DAKTSVFVVDPKESFVKATVQSREGGKVTAKTEAGATVTVKDDQVFPMNP. A phosphothreonine mark is found at threonine 64 and threonine 69. One can recognise a Myosin motor domain in the interval 86 to 782; that stretch reads DKIEDMAMMT…LLGLLEEMRD (697 aa). Residue lysine 130 is modified to N6,N6,N6-trimethyllysine. Residue 179–186 participates in ATP binding; sequence GESGAGKT. The residue at position 389 (tyrosine 389) is a Phosphotyrosine. Position 419 is a phosphothreonine (threonine 419). Phosphotyrosine is present on tyrosine 424. The tract at residues 659 to 681 is actin-binding; it reads LNKLMTNLRSTHPHFVRCIIPNE. At histidine 757 the chain carries Pros-methylhistidine. The segment at 761-775 is actin-binding; sequence KFGHTKVFFKAGLLG. Residues 785–814 form the IQ domain; it reads LAQLITRTQAMCRGFLARVEYQKMVERRES. Residues 843-1939 adopt a coiled-coil conformation; it reads LLKSAETEKE…EVHTKIISEE (1097 aa). A phosphoserine mark is found at serine 1092, serine 1096, serine 1162, and serine 1237. A Phosphothreonine modification is found at threonine 1241. 2 positions are modified to phosphoserine: serine 1243 and serine 1261. Phosphothreonine is present on residues threonine 1265 and threonine 1286. Phosphoserine is present on residues serine 1288, serine 1292, serine 1303, and serine 1306. Residue threonine 1467 is modified to Phosphothreonine. Serine 1474 carries the post-translational modification Phosphoserine. A Phosphotyrosine modification is found at tyrosine 1492. Serine 1495 carries the phosphoserine modification. Threonine 1501 bears the Phosphothreonine mark. Serine 1514 carries the post-translational modification Phosphoserine. Residue threonine 1517 is modified to Phosphothreonine. 7 positions are modified to phosphoserine: serine 1542, serine 1554, serine 1574, serine 1600, serine 1603, serine 1714, and serine 1726. Threonine 1730 and threonine 1736 each carry phosphothreonine. The residue at position 1739 (serine 1739) is a Phosphoserine.

It belongs to the TRAFAC class myosin-kinesin ATPase superfamily. Myosin family. Muscle myosin is a hexameric protein that consists of 2 heavy chain subunits (MHC), 2 alkali light chain subunits (MLC) and 2 regulatory light chain subunits (MLC-2). Interacts with SLC26A5.

Its subcellular location is the cytoplasm. The protein resides in the myofibril. In terms of biological role, required for normal hearing. It plays a role in cochlear amplification of auditory stimuli, likely through the positive regulation of prestin (SLC26A5) activity and outer hair cell (OHC) electromotility. This Homo sapiens (Human) protein is Myosin-1.